We begin with the raw amino-acid sequence, 457 residues long: MTKKVYVKTFGCQMNEYDSDKMVDVLNAAEGLEKTDTPEDADIILFNTCSVREKAQEKVFSDLGRVRELKEAKPDLLIGVGGCVASQEGASIVARAPYVDLVFGPQTLHRLPQMIDARRESGRAQVDITFPEIEKFDHLPPARVEGPSAFVSIMEGCSKYCSYCVVPYTRGDEVSRPLDDVLTEVAGLADQGVREVTLLGQNVNAYRGAIAAGSAEIADFATLIEYVADIPGIERIRYTTSHPKEFTQRLLDVYAKVPKLVDHLHLPVQHGSDRILMAMKRGYTVLEYKSVIRKLRAIRPNLSLSTNIIVGFPGETDADFDKTMALVHEMSYDTSFSFIYSPRPGTPAANLADDTPRELKLKRLQHLQATIEENVARISQSMLGKVERILVEGPSRKDPNELAGRTENNRVVNFPAPSAAHPRLIGQMIDVKINHAYPHSLRGELVLAHGDASAATH.

Residues 3-120 (KKVYVKTFGC…LPQMIDARRE (118 aa)) enclose the MTTase N-terminal domain. Cys-12, Cys-49, Cys-83, Cys-157, Cys-161, and Cys-164 together coordinate [4Fe-4S] cluster. The Radical SAM core domain maps to 143-377 (RVEGPSAFVS…QATIEENVAR (235 aa)). A TRAM domain is found at 380 to 447 (QSMLGKVERI…PHSLRGELVL (68 aa)).

This sequence belongs to the methylthiotransferase family. MiaB subfamily. As to quaternary structure, monomer. The cofactor is [4Fe-4S] cluster.

Its subcellular location is the cytoplasm. The enzyme catalyses N(6)-dimethylallyladenosine(37) in tRNA + (sulfur carrier)-SH + AH2 + 2 S-adenosyl-L-methionine = 2-methylsulfanyl-N(6)-dimethylallyladenosine(37) in tRNA + (sulfur carrier)-H + 5'-deoxyadenosine + L-methionine + A + S-adenosyl-L-homocysteine + 2 H(+). Functionally, catalyzes the methylthiolation of N6-(dimethylallyl)adenosine (i(6)A), leading to the formation of 2-methylthio-N6-(dimethylallyl)adenosine (ms(2)i(6)A) at position 37 in tRNAs that read codons beginning with uridine. The polypeptide is tRNA-2-methylthio-N(6)-dimethylallyladenosine synthase (Burkholderia pseudomallei (strain 1710b)).